A 182-amino-acid polypeptide reads, in one-letter code: MTLSNTERAIIESAIRDIKDFPKPGIVFKDITTLLNNGKAFGVTMNHLYEKYKEYNLDYIAGIDARGFIFGAALAQMLGVGFVPIRKKGKLPYTTISEKYSLEYGFDEVEIHLDAFSAIPNARVLLVDDLIATGGTAAASVKLINQAGALCVEACFILCLSFLDGYKKLQELTEVYSLVEVK.

It belongs to the purine/pyrimidine phosphoribosyltransferase family. In terms of assembly, homodimer.

It localises to the cytoplasm. It catalyses the reaction AMP + diphosphate = 5-phospho-alpha-D-ribose 1-diphosphate + adenine. Its pathway is purine metabolism; AMP biosynthesis via salvage pathway; AMP from adenine: step 1/1. Its function is as follows. Catalyzes a salvage reaction resulting in the formation of AMP, that is energically less costly than de novo synthesis. In Sulfurimonas denitrificans (strain ATCC 33889 / DSM 1251) (Thiomicrospira denitrificans (strain ATCC 33889 / DSM 1251)), this protein is Adenine phosphoribosyltransferase.